We begin with the raw amino-acid sequence, 437 residues long: ATP-dependent protease ATPase subunit HslU (437 aa).

Residues Val-18, 60–65 (GCGKTE), Asp-250, Glu-315, and Arg-387 each bind ATP.

This sequence belongs to the ClpX chaperone family. HslU subfamily. As to quaternary structure, a double ring-shaped homohexamer of HslV is capped on each side by a ring-shaped HslU homohexamer. The assembly of the HslU/HslV complex is dependent on binding of ATP.

The protein localises to the cytoplasm. Its function is as follows. ATPase subunit of a proteasome-like degradation complex; this subunit has chaperone activity. The binding of ATP and its subsequent hydrolysis by HslU are essential for unfolding of protein substrates subsequently hydrolyzed by HslV. HslU recognizes the N-terminal part of its protein substrates and unfolds these before they are guided to HslV for hydrolysis. This is ATP-dependent protease ATPase subunit HslU from Methylobacterium radiotolerans (strain ATCC 27329 / DSM 1819 / JCM 2831 / NBRC 15690 / NCIMB 10815 / 0-1).